The chain runs to 149 residues: NADH-quinone oxidoreductase subunit I 1 (149 aa).

2 4Fe-4S ferredoxin-type domains span residues 51 to 82 and 93 to 122; these read LKSF…VQGT and THYV…YSTE. Residues cysteine 62, cysteine 65, cysteine 68, cysteine 72, cysteine 102, cysteine 105, cysteine 108, and cysteine 112 each contribute to the [4Fe-4S] cluster site.

Belongs to the complex I 23 kDa subunit family. NDH-1 is composed of 14 different subunits. Subunits NuoA, H, J, K, L, M, N constitute the membrane sector of the complex. [4Fe-4S] cluster serves as cofactor.

It is found in the cell inner membrane. The enzyme catalyses a quinone + NADH + 5 H(+)(in) = a quinol + NAD(+) + 4 H(+)(out). NDH-1 shuttles electrons from NADH, via FMN and iron-sulfur (Fe-S) centers, to quinones in the respiratory chain. The immediate electron acceptor for the enzyme in this species is believed to be ubiquinone. Couples the redox reaction to proton translocation (for every two electrons transferred, four hydrogen ions are translocated across the cytoplasmic membrane), and thus conserves the redox energy in a proton gradient. The protein is NADH-quinone oxidoreductase subunit I 1 of Syntrophobacter fumaroxidans (strain DSM 10017 / MPOB).